Consider the following 585-residue polypeptide: Glycerol-3-phosphate dehydrogenase (585 aa).

Residue 37-65 (DVVVIGGGVVGSGCALDAATRGLKVALVE) participates in FAD binding.

This sequence belongs to the FAD-dependent glycerol-3-phosphate dehydrogenase family. It depends on FAD as a cofactor.

It localises to the cytoplasm. The enzyme catalyses a quinone + sn-glycerol 3-phosphate = dihydroxyacetone phosphate + a quinol. In Mycobacterium leprae (strain TN), this protein is Glycerol-3-phosphate dehydrogenase (glpD).